A 462-amino-acid polypeptide reads, in one-letter code: Fumarate hydratase class II (462 aa).

Substrate contacts are provided by residues 97–99, 127–130, 137–139, and T185; these read SGT, HPND, and SSN. The active-site Proton donor/acceptor is H186. Residue S316 is part of the active site. Substrate contacts are provided by residues S317 and 322 to 324; that span reads KVN.

The protein belongs to the class-II fumarase/aspartase family. Fumarase subfamily. As to quaternary structure, homotetramer.

The protein localises to the cytoplasm. The enzyme catalyses (S)-malate = fumarate + H2O. The protein operates within carbohydrate metabolism; tricarboxylic acid cycle; (S)-malate from fumarate: step 1/1. In terms of biological role, involved in the TCA cycle. Catalyzes the stereospecific interconversion of fumarate to L-malate. This Halalkalibacterium halodurans (strain ATCC BAA-125 / DSM 18197 / FERM 7344 / JCM 9153 / C-125) (Bacillus halodurans) protein is Fumarate hydratase class II.